Here is a 128-residue protein sequence, read N- to C-terminus: Large ribosomal subunit protein eL8 (128 aa).

Belongs to the eukaryotic ribosomal protein eL8 family. As to quaternary structure, part of the 50S ribosomal subunit. Probably part of the RNase P complex.

The protein localises to the cytoplasm. Its function is as follows. Multifunctional RNA-binding protein that recognizes the K-turn motif in ribosomal RNA, the RNA component of RNase P, box H/ACA, box C/D and box C'/D' sRNAs. The polypeptide is Large ribosomal subunit protein eL8 (Staphylothermus marinus (strain ATCC 43588 / DSM 3639 / JCM 9404 / F1)).